The chain runs to 524 residues: Cytochrome P450 monooxygenase oblB (524 aa).

The next 3 helical transmembrane spans lie at 18 to 38, 225 to 245, and 322 to 342; these read ILNA…GLVI, FHSG…IHLI, and VLIG…VYYI. Residue Cys-466 coordinates heme.

The protein belongs to the cytochrome P450 family. Requires heme as cofactor.

The protein resides in the membrane. The catalysed reaction is ophiobolin F + 4 reduced [NADPH--hemoprotein reductase] + 4 O2 = ophiobolin C + 4 oxidized [NADPH--hemoprotein reductase] + 6 H2O + 4 H(+). Its pathway is secondary metabolite biosynthesis; terpenoid biosynthesis. Its function is as follows. Cytochrome P450 monooxygenase; part of the gene cluster that mediates the biosynthesis of the sesterterpenes ophiobolins, fungal phytotoxins with potential anti-cancer activities. The first step of the pathway is performed by the sesterterpene synthase oblA that possesses both prenyl transferase and terpene cyclase activity, converting isopentenyl diphosphate and dimethylallyl diphosphate into geranylfarnesyl diphosphate (GFPP) and further converting GFPP into ophiobolin F, respectively. Other sesterterpenoids (C(25) terpenoids) are found as minor products of oblA. The cytochrome P450 monooxygenase oblB then catalyzes a four-step oxidative transformation of ophiobolin F to yield ophiobolin C. The FAD-dependent oxidoreductase oblC might be involved in a later oxidation step that produces ophiobolin A. The chain is Cytochrome P450 monooxygenase oblB from Cochliobolus heterostrophus (strain C5 / ATCC 48332 / race O) (Southern corn leaf blight fungus).